A 260-amino-acid chain; its full sequence is MQKDYQKLIVYLCDFLEKEVQKKGFKKVVYGLSGGLDSAVVGVLCQKVFKENAHALLMPSSASMPENKTDALSLCKKFSISYTEYSIAPYDAIFGSHFKDASLTRKGNFCARLRMAFLYDYSLKSDSLVIGTSNKSERMLGYGTLFGDLACAINPIGELFKTEVYELARRLNIPKKILNKPPSADLFVGQSDEKDLGYPYSVIDPLLKDIEALFKNKPIDTETLTQLGYDEILVKNITSRIQKNAFKLELPTIAQKFNPK.

Gly-31 to Ser-38 contributes to the ATP binding site. Asp-37 serves as a coordination point for Mg(2+). Arg-112 is a deamido-NAD(+) binding site. Thr-132 serves as a coordination point for ATP. Glu-137 provides a ligand contact to Mg(2+). Residues Lys-161 and Ser-183 each contribute to the ATP site.

It belongs to the NAD synthetase family. In terms of assembly, homodimer.

It catalyses the reaction deamido-NAD(+) + NH4(+) + ATP = AMP + diphosphate + NAD(+) + H(+). The protein operates within cofactor biosynthesis; NAD(+) biosynthesis; NAD(+) from deamido-NAD(+) (ammonia route): step 1/1. Functionally, catalyzes the ATP-dependent amidation of deamido-NAD to form NAD. Uses ammonia as a nitrogen source. The sequence is that of NH(3)-dependent NAD(+) synthetase from Helicobacter pylori (strain HPAG1).